A 622-amino-acid polypeptide reads, in one-letter code: MVRRWIPSGRHLRNNDNTGDDDDSEFTNSMDSGMSIPSLRDSMTTRSSHNDPIKPALMNDSNKVKNLEKELTNAKIKIQVLYEYIRRIPNKDGNAPSLGNDTDFRNSIIEGLNLEINKLKQDLKAKEVEYQDTLQFVQENLENSESIVNTINHLLSFILTHFNEQDENAHLLDKEERETLEETLELSSDYVLEKMDTLSKFIIQFLQDFLHSKSRAESKQDKEEFLSLAQSSPAGSQLESRDSPSSKEENTDGGYQNDEIHDSNNHIDTENVMANSTSLPISAVESRFEKTLDTQLEIVIENLHKEYDQFINSIRLKFEKSQKLEKIIASKLNEQSHLLDSLELEENSSSVIEKQDHLISQLKEKIESQSVLINNLEKLKEDIIKMKQNEKVLTKELETQTKINKLKENNWDSYINDLEKQINDLQIDKSEEFHVIQNQLDKLDLENYQLKNQLNTLDNQKLILSQYESNFIKFNQNLLLHLDSIFNILQKILQESSIAQFDRKMKSIKSVPNALKNLNLIQPKLESLYTFIETALESIINSYISSLISMETPEQPHQQGNELTATPNKELTLRIEELQRRWISERERRKLDANASEARIKALEQENESLRSKLFNLSINNP.

2 disordered regions span residues 1-58 (MVRR…PALM) and 221-263 (DKEE…IHDS). Positions 228–238 (LAQSSPAGSQL) are enriched in polar residues. Residues 239–250 (ESRDSPSSKEEN) are compositionally biased toward basic and acidic residues.

In terms of assembly, homooligomer. Interacts with CDC5, KAR1, KIN4, SPC97, SPC98, STU2 and TUB4. In terms of processing, phosphorylated by CDC5.

It localises to the cytoplasm. It is found in the cytoskeleton. Its subcellular location is the microtubule organizing center. The protein localises to the spindle pole body. Its function is as follows. Spindle pole body (SPB) component that acts as the gamma-tubulin complex-binding protein of the SPB outer plaque. Anchors cytoplasmic microtubules at the half bridge of the spindle pole body (SPB) and accordingly functions in nuclear position and spindle orientation, including anaphase spindle migration into the bud. Recruits KIN4 kinase to both SPBs when cytoplasmic microtubules are defective, to delay mitotic exit. Links cytoplasmic microtubules with spindle orientation checkpoint (SPOC) components and, therefore, could function as part of the sensors of spindle orientation defects. Required for cytoplasmic astral microtubule growth during mitosis. Is strictly required for mating and karyogamy. This Saccharomyces cerevisiae (strain ATCC 204508 / S288c) (Baker's yeast) protein is Gamma tubulin complex adapter SPC72 (SPC72).